Here is a 532-residue protein sequence, read N- to C-terminus: Pre-rRNA-processing protein pro-1 (532 aa).

WD repeat units lie at residues 136–175 (AHYQNITKLALSDDDSMVFTASKDGAIHGYLVTELVSADR) and 287–326 (GHSDEITRLTINTDGTLLASGDASGKYCIWEISSHQCLKV). Residues 435–464 (TLGDDEDDAPEVGNQRRQNKKNNKKNRKLQ) are disordered. Positions 445 to 526 (EVGNQRRQNK…INRQMYEFVA (82 aa)) form a coiled coil. Over residues 451-464 (RQNKKNNKKNRKLQ) the composition is skewed to basic residues.

The protein belongs to the WD repeat IPI3/WDR18 family. In terms of assembly, component of the PELP1 complex, composed of at least PELP1, TEX10 and WDR18. The complex interacts with pre-60S ribosome particles.

It localises to the nucleus. It is found in the nucleolus. The protein resides in the nucleoplasm. Functionally, component of the PELP1 complex involved in the nucleolar steps of 28S rRNA maturation and the subsequent nucleoplasmic transit of the pre-60S ribosomal subunit. Required for processing ITS2 sequences from rRNA intermediates during 26S rRNA maturation. Required in the soma to promote normal proliferation and prevent germline tumor formation. The sequence is that of Pre-rRNA-processing protein pro-1 (pro-1) from Caenorhabditis briggsae.